Consider the following 466-residue polypeptide: Secreted RxLR effector protein 101 (466 aa).

Residues methionine 1–alanine 21 form the signal peptide. Positions arginine 48–arginine 63 match the RxLR-dEER motif. Disordered regions lie at residues lysine 99–alanine 127 and arginine 384–serine 405. Over residues lysine 109–threonine 121 the composition is skewed to basic residues. Positions threonine 385–leucine 395 are enriched in polar residues.

It belongs to the RxLR effector family.

The protein localises to the secreted. The protein resides in the host nucleus. Its function is as follows. Secreted effector that partially suppresses the host cell death induced by cell death-inducing proteins. In Plasmopara viticola (Downy mildew of grapevine), this protein is Secreted RxLR effector protein 101.